The sequence spans 112 residues: uncharacterized protein (112 aa).

Residues 70-112 (GLYRGRRPPGRDAARPTTAILFAQGRPPLLDQRAPTRRGSHQR) form a disordered region.

This is an uncharacterized protein from Homo sapiens (Human).